Here is a 473-residue protein sequence, read N- to C-terminus: Adhesive plaque matrix protein 2 (473 aa).

Positions 1-17 (MLFSFFLLLTCTQLCLG) are cleaved as a signal peptide. A 3',4'-dihydroxyphenylalanine mark is found at Tyr-23, Tyr-31, Tyr-36, and Tyr-43. EGF-like domains follow at residues 45-81 (PVNP…YNCN), 82-117 (LKNA…GRLC), 118-154 (EKNV…GPRC), 155-191 (EVHA…GPTC), 192-228 (QENA…GPEC), 229-265 (ERYV…GPTC), 266-301 (KVNV…GPTC), 302-340 (GENV…PTCE), 342-378 (KPNP…RHCT), 383-420 (KPNP…RHCT), and 425-461 (KKNP…RYCS). 33 disulfides stabilise this stretch: Cys-49–Cys-60, Cys-54–Cys-69, Cys-71–Cys-80, Cys-86–Cys-97, Cys-91–Cys-106, Cys-108–Cys-117, Cys-122–Cys-133, Cys-127–Cys-143, Cys-145–Cys-154, Cys-159–Cys-170, Cys-164–Cys-180, Cys-182–Cys-191, Cys-196–Cys-207, Cys-201–Cys-217, Cys-219–Cys-228, Cys-233–Cys-244, Cys-238–Cys-254, Cys-256–Cys-265, Cys-270–Cys-281, Cys-275–Cys-290, Cys-292–Cys-301, Cys-306–Cys-317, Cys-311–Cys-328, Cys-330–Cys-339, Cys-346–Cys-357, Cys-351–Cys-366, Cys-368–Cys-377, Cys-387–Cys-399, Cys-393–Cys-408, Cys-410–Cys-419, Cys-429–Cys-440, Cys-434–Cys-449, and Cys-451–Cys-460. Residue Asn-93 is glycosylated (N-linked (GlcNAc...) asparagine).

Post-translationally, contains L-DOPA (3',4'-dihydroxyphenylalanine). Produced by the byssal gland.

Its subcellular location is the secreted. In terms of biological role, provides adhesiveness to the mussel's foot. Mussels produce one of the strongest water insoluble glues. The mussel's adhesive is a bundle of threads, called a byssus, formed by a fibrous collagenous core coated with adhesive proteins. The sequence is that of Adhesive plaque matrix protein 2 (FP2) from Mytilus galloprovincialis (Mediterranean mussel).